The following is a 363-amino-acid chain: Inactive CLIP domain-containing serine protease A8 (363 aa).

The signal sequence occupies residues 1-25; sequence MPSWWCCCCLVVLLYAQRMIVPSSA. Residues 33-82 enclose the Clip domain; sequence LQECPGGFCSPKYLCPNGTYNEANAQNQEIIMLRFGEEDVCQDYMQVCCS. Cystine bridges form between C36-C80, C41-C73, and C47-C81. N-linked (GlcNAc...) asparagine glycans are attached at residues N49, N83, N117, and N166. One can recognise a Peptidase S1 domain in the interval 114–360; it reads VEGNRTYAQY…FVTWINATIE (247 aa). 3 disulfide bridges follow: C245–C317, C276–C297, and C307–C336. 2 N-linked (GlcNAc...) asparagine glycosylation sites follow: N319 and N356.

It belongs to the peptidase S1 family. CLIP subfamily. Heterodimer of a light chain and a heavy chain; disulfide-linked. Post-translationally, secreted as a full-length protein. Proteolytically cleaved into two chains which remain covalently linked. Cleavage is induced by Gram-positive or Gram-negative bacteria infection.

The protein localises to the secreted. In terms of biological role, inactive serine protease which plays an essential role in the innate immune response against bacteria, fungi and protozoa infection by activating the melanization cascade. In the melanization cascade, acts downstream of TEP1 and SPCLIP1 to promote CLIPA28 and CLIPC9 proteolytic cleavage and CLIPC9 recruitment to microbial surfaces. In the resistant strain L3-5, required for the melanization of killed parasite P.berghei ookinetes which results in their clearance. In the susceptible strain G3, appears to be dispensable for ookinete elimination which occurs by lysis. Required for the melanization of Gram-positive and Gram-negative bacteria. During the late stage of fungus B.bassiana-mediated infection, required for the initiation of hyphae melanization by promoting prophenoloxidase PPO activation. In Anopheles gambiae (African malaria mosquito), this protein is Inactive CLIP domain-containing serine protease A8.